A 505-amino-acid chain; its full sequence is Catalase (505 aa).

Residues 1–25 form a disordered region; sequence MSQQDKKLTGVFGHPVSDRENSMTA. Residues histidine 56 and asparagine 129 contribute to the active site. Tyrosine 339 contributes to the heme binding site.

It belongs to the catalase family. Homodimer. The cofactor is heme.

The enzyme catalyses 2 H2O2 = O2 + 2 H2O. Decomposes hydrogen peroxide into water and oxygen; serves to protect cells from the toxic effects of hydrogen peroxide. The sequence is that of Catalase (katA) from Staphylococcus aureus.